We begin with the raw amino-acid sequence, 412 residues long: Lipoyl synthase, mitochondrial (412 aa).

The transit peptide at 1-28 directs the protein to the mitochondrion; sequence MASIAPSLKRAHAPLRKALTASSTIRAF. Cys-124, Cys-129, Cys-135, Cys-155, Cys-159, Cys-162, and Ser-372 together coordinate [4Fe-4S] cluster. Residues 138-361 form the Radical SAM core domain; that stretch reads GSDKNAATAT…NKRALDMGFL (224 aa).

This sequence belongs to the radical SAM superfamily. Lipoyl synthase family. [4Fe-4S] cluster is required as a cofactor.

The protein localises to the mitochondrion. The enzyme catalyses [[Fe-S] cluster scaffold protein carrying a second [4Fe-4S](2+) cluster] + N(6)-octanoyl-L-lysyl-[protein] + 2 oxidized [2Fe-2S]-[ferredoxin] + 2 S-adenosyl-L-methionine + 4 H(+) = [[Fe-S] cluster scaffold protein] + N(6)-[(R)-dihydrolipoyl]-L-lysyl-[protein] + 4 Fe(3+) + 2 hydrogen sulfide + 2 5'-deoxyadenosine + 2 L-methionine + 2 reduced [2Fe-2S]-[ferredoxin]. The protein operates within protein modification; protein lipoylation via endogenous pathway; protein N(6)-(lipoyl)lysine from octanoyl-[acyl-carrier-protein]: step 2/2. Catalyzes the radical-mediated insertion of two sulfur atoms into the C-6 and C-8 positions of the octanoyl moiety bound to the lipoyl domains of lipoate-dependent enzymes, thereby converting the octanoylated domains into lipoylated derivatives. The polypeptide is Lipoyl synthase, mitochondrial (Fusarium vanettenii (strain ATCC MYA-4622 / CBS 123669 / FGSC 9596 / NRRL 45880 / 77-13-4) (Fusarium solani subsp. pisi)).